A 585-amino-acid polypeptide reads, in one-letter code: Suppressor of tumorigenicity 7 protein (585 aa).

A helical transmembrane segment spans residues 15–35 (CIVWSWTYLWTVWFFIVLFLV). The N-linked (GlcNAc...) asparagine glycan is linked to asparagine 47. A helical transmembrane segment spans residues 62 to 82 (FYVALTGTSSLISGLILIFEW). Serine 386 is modified (phosphoserine). The helical transmembrane segment at 512 to 532 (LPFFILFTAGLCSFTAMLALL) threads the bilayer.

This sequence belongs to the ST7 family.

The protein resides in the membrane. In Equus caballus (Horse), this protein is Suppressor of tumorigenicity 7 protein (ST7).